The chain runs to 364 residues: Aminomethyltransferase (364 aa).

This sequence belongs to the GcvT family. In terms of assembly, the glycine cleavage system is composed of four proteins: P, T, L and H.

The catalysed reaction is N(6)-[(R)-S(8)-aminomethyldihydrolipoyl]-L-lysyl-[protein] + (6S)-5,6,7,8-tetrahydrofolate = N(6)-[(R)-dihydrolipoyl]-L-lysyl-[protein] + (6R)-5,10-methylene-5,6,7,8-tetrahydrofolate + NH4(+). Functionally, the glycine cleavage system catalyzes the degradation of glycine. This Proteus mirabilis (strain HI4320) protein is Aminomethyltransferase.